A 133-amino-acid chain; its full sequence is MGLTYQLIPALVCLLAFTSTFVHGQNFNNTLKEIIKTLNILTARNDSCMELTVMDVLAAPKNTSDKEIFCRATTVLRQIYTHHNCSTKFLKGLDRNLSSMANRTCSVNEVKKCTLKDFLERLKAIMQKKYSKH.

An N-terminal signal peptide occupies residues 1 to 24 (MGLTYQLIPALVCLLAFTSTFVHG). 6 N-linked (GlcNAc...) asparagine glycosylation sites follow: Asn-28, Asn-45, Asn-62, Asn-84, Asn-96, and Asn-102. Intrachain disulfides connect Cys-48-Cys-85 and Cys-70-Cys-113.

It belongs to the IL-4/IL-13 family.

It localises to the secreted. In terms of biological role, participates in at least several B-cell activation processes as well as of other cell types. It is a costimulator of DNA-synthesis. It induces the expression of class II MHC molecules on resting B-cells. It enhances both secretion and cell surface expression of IgE and IgG1. It also regulates the expression of the low affinity Fc receptor for IgE (CD23) on both lymphocytes and monocytes. Positively regulates IL31RA expression in macrophages. Stimulates autophagy in dendritic cells by interfering with mTORC1 signaling and through the induction of RUFY4. The sequence is that of Interleukin-4 (IL4) from Felis catus (Cat).